We begin with the raw amino-acid sequence, 908 residues long: Probable serine/threonine-protein kinase DDB_G0278521 (908 aa).

Topologically, residues 1–153 (MSNNKIIESL…RGEKLSTLDR (153 aa)) are extracellular. The helical transmembrane segment at 154-174 (IICFSIIYSQDQILLFLLNFI) threads the bilayer. Residues 175–908 (LSNINCNNNN…SDQNDSDLYD (734 aa)) are Cytoplasmic-facing. ANK repeat units follow at residues 258–289 (LKVY…NVYN), 300–326 (TNRS…NIHD), 330–361 (KGML…ALDQ), 362–391 (SNNT…RLSI), and 395–424 (NGRY…KMNS). A compositionally biased stretch (low complexity) spans 461 to 472 (NSNNLTNSNSSS). The segment at 461–491 (NSNNLTNSNSSSVGGLRISNGGNTQQQSIQI) is disordered. The segment covering 480-490 (NGGNTQQQSIQ) has biased composition (polar residues). Residues 495–524 (ENNTPIDLLVLNNHFTIAIELLKYEGYIVG) form an ANK 6 repeat. Residues 530–817 (FKTARKIGAG…LPIANIPKFL (288 aa)) enclose the Protein kinase domain. ATP contacts are provided by residues 536–544 (IGAGAFGDV) and Lys557. Residue Asp677 is the Proton acceptor of the active site.

Belongs to the protein kinase superfamily. TKL Ser/Thr protein kinase family.

The protein localises to the membrane. It catalyses the reaction L-seryl-[protein] + ATP = O-phospho-L-seryl-[protein] + ADP + H(+). The catalysed reaction is L-threonyl-[protein] + ATP = O-phospho-L-threonyl-[protein] + ADP + H(+). The sequence is that of Probable serine/threonine-protein kinase DDB_G0278521 from Dictyostelium discoideum (Social amoeba).